We begin with the raw amino-acid sequence, 110 residues long: UPF0145 protein BLD_1357 (110 aa).

It belongs to the UPF0145 family.

This chain is UPF0145 protein BLD_1357, found in Bifidobacterium longum (strain DJO10A).